Consider the following 251-residue polypeptide: Small ribosomal subunit protein uS2 (251 aa).

Belongs to the universal ribosomal protein uS2 family.

This chain is Small ribosomal subunit protein uS2 (rpsB), found in Arthrospira platensis (Spirulina platensis).